Reading from the N-terminus, the 518-residue chain is Xylose import ATP-binding protein XylG (518 aa).

ABC transporter domains are found at residues 6-245 (LQMN…VGRE) and 262-507 (FEAR…LSHS). 38–45 (GENGAGKS) contributes to the ATP binding site.

It belongs to the ABC transporter superfamily. Xylose importer (TC 3.A.1.2.4) family. As to quaternary structure, the complex is composed of two ATP-binding proteins (XylG), two transmembrane proteins (XylH) and a solute-binding protein (XylF).

It is found in the cell inner membrane. It catalyses the reaction D-xylose(out) + ATP + H2O = D-xylose(in) + ADP + phosphate + H(+). Its function is as follows. Part of the ABC transporter complex XylFGH involved in xylose import. Responsible for energy coupling to the transport system. The sequence is that of Xylose import ATP-binding protein XylG from Pseudomonas syringae pv. syringae (strain B728a).